Consider the following 278-residue polypeptide: Trehalose/maltose transport system permease protein MalG (278 aa).

Helical transmembrane passes span 12–32, 74–94, 106–126, 141–161, 186–206, and 242–262; these read IIGAILMAIICLFPFIWMIVV, IIIASLVTLTTVSISSLAAYA, IPIFVLGLSMFPQISLVGYLF, LYFPYVAWTLPLSLWILLSYF, IILPLSAPALFSTALLVFIAA, and GSVMAASVISTIPLVIMALLF. One can recognise an ABC transmembrane type-1 domain in the interval 70–262; the sequence is LKNSIIIASL…IPLVIMALLF (193 aa).

This sequence belongs to the binding-protein-dependent transport system permease family. In terms of assembly, the complex is composed of two ATP-binding proteins (MalK), two transmembrane proteins (MalG and MalF) and a solute-binding protein (MalE).

The protein localises to the cell membrane. Functionally, part of the ABC transporter complex MalEFGK involved in trehalose/maltose import. Responsible for the translocation of the substrate across the membrane. In Thermococcus litoralis (strain ATCC 51850 / DSM 5473 / JCM 8560 / NS-C), this protein is Trehalose/maltose transport system permease protein MalG (malG).